Consider the following 133-residue polypeptide: Small ribosomal subunit protein uS8 (133 aa).

The interval 1 to 28 (MANHDPISDMLTRIRNASEKRHEKTKVP) is disordered. Positions 16–26 (NASEKRHEKTK) are enriched in basic and acidic residues.

Belongs to the universal ribosomal protein uS8 family. In terms of assembly, part of the 30S ribosomal subunit. Contacts proteins S5 and S12.

Its function is as follows. One of the primary rRNA binding proteins, it binds directly to 16S rRNA central domain where it helps coordinate assembly of the platform of the 30S subunit. The polypeptide is Small ribosomal subunit protein uS8 (Prochlorococcus marinus (strain NATL2A)).